Consider the following 116-residue polypeptide: Type IV narrow pilus major component PilA5 (116 aa).

Residues 1–5 constitute a propeptide, leader sequence; that stretch reads MRAKG. The residue at position 6 (Phe6) is an N-methylphenylalanine. The chain crosses the membrane as a helical span at residues 6–26; sequence FTLIELAIVIVIIGILVAIAV.

Glycosylated.

Its subcellular location is the cell inner membrane. It localises to the cell outer membrane. The protein localises to the periplasm. Functionally, plays an essential role in forming the main structure of the narrow T4P pili that participates in twitching motility. This chain is Type IV narrow pilus major component PilA5 (pilA5), found in Thermus thermophilus (strain ATCC BAA-163 / DSM 7039 / HB27).